Consider the following 144-residue polypeptide: MRLNDLHPAEGSRPEGKRVGRGIGSGLGKTGGRGHKGQKSRSGGSVKPGFEGGQMPLQRRVPKFGFTSKLAMGTAEVRLAELAKVEGDVIDLASLKAANIVRRDMKRAKIVLQGEIDRAVTVRGVALTKGAREAVEKAGGKVEE.

Positions 1–18 (MRLNDLHPAEGSRPEGKR) are enriched in basic and acidic residues. Positions 1–58 (MRLNDLHPAEGSRPEGKRVGRGIGSGLGKTGGRGHKGQKSRSGGSVKPGFEGGQMPLQ) are disordered. The segment covering 21–31 (RGIGSGLGKTG) has biased composition (gly residues).

The protein belongs to the universal ribosomal protein uL15 family. As to quaternary structure, part of the 50S ribosomal subunit.

Its function is as follows. Binds to the 23S rRNA. This is Large ribosomal subunit protein uL15 from Alcanivorax borkumensis (strain ATCC 700651 / DSM 11573 / NCIMB 13689 / SK2).